The sequence spans 256 residues: Autophagy-related protein 40 (256 aa).

Positions 1 to 16 (MFNLILWPLFLLTSVA) are cleaved as a signal peptide. At 17 to 67 (IPLQLTLEVVYLTSSVDFSKASAAKTATSLGQSPVVITIYKSLLKYWSLYE) the chain is on the lumenal side. A helical membrane pass occupies residues 68–88 (FIHFIYLYTPIDAFLNFLPFT). Topologically, residues 89-256 (SLLMSFGSIC…DILDETTELD (168 aa)) are cytoplasmic. Residues 197–243 (QPQGDKNRYQNGDRESTKNGAAYQKSSQQSSSFEQNFTSTEFPNDYD) are disordered. Basic and acidic residues predominate over residues 199 to 213 (QGDKNRYQNGDREST). Low complexity predominate over residues 222–238 (SSQQSSSFEQNFTSTEF). An ATG8-binding motif is present at residues 242–245 (YDFM).

As to quaternary structure, interacts with ATG8 and ATG11.

It localises to the endoplasmic reticulum membrane. The protein localises to the preautophagosomal structure membrane. Its function is as follows. Acts as a receptor for reticulophagy. Directs autophagic sequestration of folded tubules/sheets derived from the cortical endoplasmic reticulum (cER) and the cytoplasmic endoplasmic reticulum (cytoER) into autophagosomes. Is not required for the cytoplasm-to-vacuole targeting pathway, mitophagy, pexophagy, and non-selective autophagy. In Saccharomyces cerevisiae (strain ATCC 204508 / S288c) (Baker's yeast), this protein is Autophagy-related protein 40.